A 287-amino-acid polypeptide reads, in one-letter code: Very long chain fatty acid elongase 4 (287 aa).

A run of 3 helical transmembrane segments spans residues 33–53 (ILVY…EHIM), 64–84 (PFVF…YSCV), and 115–135 (FWVF…VFLV). The HxxHH motif signature appears at 145 to 149 (HWYHH). The active-site Nucleophile is the His148. The next 4 helical transmembrane spans lie at 150-170 (LTVA…GLWF), 172-192 (TMNY…ACGM), 199-219 (IAPF…LIVL), and 241-261 (LGLV…GKLY).

It belongs to the ELO family.

The protein resides in the membrane. It carries out the reaction a very-long-chain acyl-CoA + malonyl-CoA + H(+) = a very-long-chain 3-oxoacyl-CoA + CO2 + CoA. In terms of biological role, involved in the synthesis of fatty acids. Elongates C16:0 and C18:0 fatty acids to C26:0, with C24:0 being the main product. This chain is Very long chain fatty acid elongase 4, found in Trypanosoma cruzi (strain CL Brener).